The chain runs to 204 residues: Potassium-transporting ATPase KdpC subunit (204 aa).

Residues 21 to 41 (AALVIFVGLSLVTGVLYPVVV) traverse the membrane as a helical segment.

The protein belongs to the KdpC family. The system is composed of three essential subunits: KdpA, KdpB and KdpC.

Its subcellular location is the cell inner membrane. Part of the high-affinity ATP-driven potassium transport (or Kdp) system, which catalyzes the hydrolysis of ATP coupled with the electrogenic transport of potassium into the cytoplasm. This subunit acts as a catalytic chaperone that increases the ATP-binding affinity of the ATP-hydrolyzing subunit KdpB by the formation of a transient KdpB/KdpC/ATP ternary complex. In Ralstonia nicotianae (strain ATCC BAA-1114 / GMI1000) (Ralstonia solanacearum), this protein is Potassium-transporting ATPase KdpC subunit.